We begin with the raw amino-acid sequence, 1200 residues long: PAN2-PAN3 deadenylation complex catalytic subunit Pan2 (1200 aa).

WD repeat units follow at residues 153–193, 195–231, 244–280, and 328–367; these read DENE…QKYA, ETPG…VEHE, VHGN…AITP, and PVGP…SFNP. Residues 368-484 are linker; the sequence is YSRETEFALP…PTGREEEPLH (117 aa). The USP domain maps to 485-923; sequence TVSKKYRKVT…VPAILYYVKR (439 aa). Residue Ser784 is modified to Phosphoserine. In terms of domain architecture, Exonuclease spans 974–1146; it reads VGLDAEFVTL…EDARTALQLY (173 aa). 4 residues coordinate a divalent metal cation: Asp977, Glu979, Asp1086, and Asp1138. Ser1188 carries the post-translational modification Phosphoserine.

The protein belongs to the peptidase C19 family. PAN2 subfamily. In terms of assembly, forms a heterotrimer with an asymmetric homodimer of the regulatory subunit PAN3 to form the poly(A)-nuclease (PAN) deadenylation complex. Interacts with PAN3 isoform 1/Pan3L and isoform 3/Pan3S. Interacts with ZFP36. The cofactor is a divalent metal cation.

Its subcellular location is the cytoplasm. The protein resides in the P-body. The protein localises to the nucleus. The catalysed reaction is Exonucleolytic cleavage of poly(A) to 5'-AMP.. Its activity is regulated as follows. Positively regulated by the regulatory subunit PAN3. In terms of biological role, catalytic subunit of the poly(A)-nuclease (PAN) deadenylation complex, one of two cytoplasmic mRNA deadenylases involved in general and miRNA-mediated mRNA turnover. PAN specifically shortens poly(A) tails of RNA and the activity is stimulated by poly(A)-binding protein (PABP). PAN deadenylation is followed by rapid degradation of the shortened mRNA tails by the CCR4-NOT complex. Deadenylated mRNAs are then degraded by two alternative mechanisms, namely exosome-mediated 3'-5' exonucleolytic degradation, or deadenylation-dependent mRNA decaping and subsequent 5'-3' exonucleolytic degradation by XRN1. Also acts as an important regulator of the HIF1A-mediated hypoxic response. Required for HIF1A mRNA stability independent of poly(A) tail length regulation. In Mus musculus (Mouse), this protein is PAN2-PAN3 deadenylation complex catalytic subunit Pan2.